The primary structure comprises 86 residues: UPF0367 protein PMN2A_1492 (86 aa).

Belongs to the UPF0367 family.

The polypeptide is UPF0367 protein PMN2A_1492 (Prochlorococcus marinus (strain NATL2A)).